Consider the following 309-residue polypeptide: Uracil phosphoribosyltransferase homolog (309 aa).

The disordered stretch occupies residues 1–38 (MATELQCPDSMPCHNQQVNSASTPSPEQLRPGDLILDH). The segment covering 13 to 26 (CHNQQVNSASTPSP) has biased composition (polar residues). Serine 25 carries the post-translational modification Phosphoserine. Residues arginine 133, arginine 142, and 176 to 179 (EKGN) contribute to the GTP site. Residue arginine 186 coordinates 5-phospho-alpha-D-ribose 1-diphosphate. GTP is bound by residues arginine 203 and arginine 232. Residue 238 to 246 (YPILSTGNT) coordinates 5-phospho-alpha-D-ribose 1-diphosphate. 299 to 301 (THF) is a uracil binding site.

This sequence belongs to the UPRTase family. As to expression, highly expressed in leukocytes, liver, spleen and thymus, with lower expression in brain, lung and skeletal muscle.

The protein resides in the cytoplasm. The protein localises to the nucleus. This chain is Uracil phosphoribosyltransferase homolog (UPRT), found in Homo sapiens (Human).